Consider the following 316-residue polypeptide: Delta(1)-pyrroline-2-carboxylate reductase (316 aa).

The protein belongs to the ornithine cyclodeaminase/mu-crystallin family. As to quaternary structure, homodimer.

The catalysed reaction is L-proline + NAD(+) = 1-pyrroline-2-carboxylate + NADH + H(+). The enzyme catalyses L-proline + NADP(+) = 1-pyrroline-2-carboxylate + NADPH + H(+). Catalyzes the reduction of Delta(1)-pyrroline-2-carboxylate (Pyr2C) to L-proline, using preferentially NADPH over NADH as the electron donor. Together with LhpH, is involved in a metabolic pathway that converts trans-3-hydroxy-L-proline (t3LHyp) to L-proline. To a much lesser extent, can also reduce Delta(1)-piperideine-2-carboxylate (Pip2C) to L-pipecolate in vitro; however, this activity has likely no physiological significance in vivo since C.psychrerythraea probably possesses no ability to metabolize D-lysine via the L-pipecolate pathway. Does not show ornithine cyclodeaminase (OCD) activity. The chain is Delta(1)-pyrroline-2-carboxylate reductase from Colwellia psychrerythraea (strain 34H / ATCC BAA-681) (Vibrio psychroerythus).